The chain runs to 512 residues: Maturase K (512 aa).

It belongs to the intron maturase 2 family. MatK subfamily.

The protein localises to the plastid. It localises to the chloroplast. Its function is as follows. Usually encoded in the trnK tRNA gene intron. Probably assists in splicing its own and other chloroplast group II introns. The sequence is that of Maturase K from Lilium tsingtauense (Twilight lily).